The primary structure comprises 303 residues: Recombination-associated protein RdgC (303 aa).

Belongs to the RdgC family.

The protein localises to the cytoplasm. Its subcellular location is the nucleoid. Functionally, may be involved in recombination. This Shewanella sediminis (strain HAW-EB3) protein is Recombination-associated protein RdgC.